The chain runs to 232 residues: Large ribosomal subunit protein uL1 (232 aa).

The protein belongs to the universal ribosomal protein uL1 family. In terms of assembly, part of the 50S ribosomal subunit.

Binds directly to 23S rRNA. The L1 stalk is quite mobile in the ribosome, and is involved in E site tRNA release. Functionally, protein L1 is also a translational repressor protein, it controls the translation of the L11 operon by binding to its mRNA. In Rhizorhabdus wittichii (strain DSM 6014 / CCUG 31198 / JCM 15750 / NBRC 105917 / EY 4224 / RW1) (Sphingomonas wittichii), this protein is Large ribosomal subunit protein uL1.